A 230-amino-acid polypeptide reads, in one-letter code: Protein RESPONSE TO ABA AND SALT 1 (230 aa).

Residues 7–230 enclose the DOG1 domain; that stretch reads SQSFTIFVDG…RLRDRDQERA (224 aa).

In terms of biological role, negative regulator of salt (NaCl) tolerance probably by enhancing abscisic acid (ABA) sensitivity. This chain is Protein RESPONSE TO ABA AND SALT 1, found in Arabidopsis thaliana (Mouse-ear cress).